The following is a 583-amino-acid chain: Penicillin-binding protein activator LpoA (583 aa).

Positions 1 to 24 (MATILKQKLKTFFVPTAITLLLSA) are cleaved as a signal peptide. Residue Cys25 is the site of N-palmitoyl cysteine attachment. Cys25 carries S-diacylglycerol cysteine lipidation.

Belongs to the LpoA family. In terms of assembly, interacts with PBP1a.

Its subcellular location is the cell outer membrane. Its function is as follows. Regulator of peptidoglycan synthesis that is essential for the function of penicillin-binding protein 1A (PBP1a). This is Penicillin-binding protein activator LpoA from Haemophilus ducreyi (strain 35000HP / ATCC 700724).